Here is a 998-residue protein sequence, read N- to C-terminus: tRNA (34-2'-O)-methyltransferase regulator WDR6 (998 aa).

11 WD repeats span residues 148 to 185 (LYYTKLHGSSFNKLAIISGNAFGELLVWQTQFPTESDP), 200 to 239 (AHNGVIHSIEFDLQSQLLVTTSDDRSVKFWNIQKSGDWTT), 250 to 291 (GHSS…ILKR), 294 to 333 (QFGAPIWRLGFSQDAEILYSTSSTGNLVGQNLKEVLNRPK), 476 to 515 (NNREPWITAALLISEQYLLLGNREGHVMLYCRSSASDDFQ), 527 to 566 (MGSNFFKLLSLNADNAHVMSGGHEAFLKYLSVRFSDSTLR), 567 to 608 (VSQR…LLQL), 664 to 704 (RNCN…LSQR), 779 to 821 (ARLM…QLDL), 826 to 865 (DIQRCPLGIQWIASKGMLLVSTTNGEVYGFDRTLETTYFQ), and 868 to 911 (LHVT…VEQK).

It belongs to the WD repeat WDR6 family. In terms of assembly, interacts with Trm7-34.

The protein localises to the cytoplasm. Functionally, together with methyltransferase Trm7-34, methylates the 2'-O-ribose of nucleotides at position 34 of the anticodon loop of substrate tRNAs. The chain is tRNA (34-2'-O)-methyltransferase regulator WDR6 from Drosophila melanogaster (Fruit fly).